Reading from the N-terminus, the 182-residue chain is Large ribosomal subunit protein uL10 (182 aa).

Belongs to the universal ribosomal protein uL10 family. In terms of assembly, part of the ribosomal stalk of the 50S ribosomal subunit. The N-terminus interacts with L11 and the large rRNA to form the base of the stalk. The C-terminus forms an elongated spine to which L12 dimers bind in a sequential fashion forming a multimeric L10(L12)X complex.

Its function is as follows. Forms part of the ribosomal stalk, playing a central role in the interaction of the ribosome with GTP-bound translation factors. In Chloroflexus aurantiacus (strain ATCC 29364 / DSM 637 / Y-400-fl), this protein is Large ribosomal subunit protein uL10.